We begin with the raw amino-acid sequence, 328 residues long: MAAGIVASRRLRDLLTRRLTASNYPGLSISLRLTGSPAQEEASGVALGEAPDHSYESLRVTSAQKHVLHVQLNRPNKRNAMNKVFWREMVECFNKISRDADCRAVVISGAGKMFTAGVDLMDMASDILQPKGDDVARISWYLRDIITRYQETFNVIEKCPKPVIAAVHGGCIGGGVDLVTACDIRYCAQDAFFQVKEVDVGLAADVGTLQRLPKVIGNQSLVNELAFTARKMMADEALGSGLVSRVFPDKEVMLDAALALAAEISSKSPVAVQSTKVNLLYSRDHSVAESLNYVASWNMSMLQTQDLMKSVQAATENKELKSVTFSKL.

The N-terminal 26 residues, 1–26 (MAAGIVASRRLRDLLTRRLTASNYPG), are a transit peptide targeting the mitochondrion. Substrate contacts are provided by residues 116-120 (AGVDL) and Gly174. Lys231 is modified (N6-succinyllysine). Ser268 is modified (phosphoserine). The Microbody targeting signal motif lies at 326–328 (SKL). Lys327 carries the post-translational modification N6-acetyllysine.

It belongs to the enoyl-CoA hydratase/isomerase family. Homohexamer.

Its subcellular location is the mitochondrion. It is found in the peroxisome. The catalysed reaction is (3E,5Z)-octadienoyl-CoA = (2E,4E)-octadienoyl-CoA. It catalyses the reaction (3E,5Z,8Z,11Z,14Z)-eicosapentaenoyl-CoA = (2E,4E,8Z,11Z,14Z)-eicosapentaenoyl-CoA. It participates in lipid metabolism; fatty acid beta-oxidation. Its function is as follows. Isomerization of 3-trans,5-cis-dienoyl-CoA to 2-trans,4-trans-dienoyl-CoA. This Pongo abelii (Sumatran orangutan) protein is Delta(3,5)-Delta(2,4)-dienoyl-CoA isomerase, mitochondrial (ECH1).